The primary structure comprises 242 residues: ATP-dependent dethiobiotin synthetase BioD (242 aa).

ATP is bound at residue 15–20 (DVGKTV). Threonine 19 is a Mg(2+) binding site. Lysine 40 is an active-site residue. Serine 44 is a substrate binding site. Residue glutamate 117 coordinates Mg(2+). Residues 117–120 (EGAG), 178–179 (NQ), and 208–210 (PYS) each bind ATP.

It belongs to the dethiobiotin synthetase family. In terms of assembly, homodimer. Mg(2+) is required as a cofactor.

It localises to the cytoplasm. It catalyses the reaction (7R,8S)-7,8-diammoniononanoate + CO2 + ATP = (4R,5S)-dethiobiotin + ADP + phosphate + 3 H(+). It functions in the pathway cofactor biosynthesis; biotin biosynthesis; biotin from 7,8-diaminononanoate: step 1/2. Catalyzes a mechanistically unusual reaction, the ATP-dependent insertion of CO2 between the N7 and N8 nitrogen atoms of 7,8-diaminopelargonic acid (DAPA, also called 7,8-diammoniononanoate) to form a ureido ring. This Halalkalibacterium halodurans (strain ATCC BAA-125 / DSM 18197 / FERM 7344 / JCM 9153 / C-125) (Bacillus halodurans) protein is ATP-dependent dethiobiotin synthetase BioD.